Here is a 1088-residue protein sequence, read N- to C-terminus: Pathogenesis-related homeodomain protein (1088 aa).

8 repeat units span residues 140 to 152 (INMGQKETMPEEV), 173 to 199 (NSYQSGLPPENAVTDCKQVQLGHRSDD), 205 to 239 (GLVELVIGQKNVAKSPSQLVETGKRGRGRPRKVQT), 240 to 274 (GLEQLVIGQKTAAKSSSQLGDTGKRSRGRPRKVQN), 283 to 295 (INMEQKETIPEQV), 316 to 342 (NSDQSELPPENAAKNCNHAQFGHQSDD), 348 to 382 (GFKELVIGQETVAKSPSQLVDAGKRGRGRPRKVQT), and 383 to 417 (GLEQLVPVQETAAKSSSQLGDTGKRSRGRPRKVQD). Residues 140–295 (INMGQKETMP…EQKETIPEQV (156 aa)) form a 2 X 13 AA repeats region. Positions 173-342 (NSYQSGLPPE…HAQFGHQSDD (170 aa)) are 2 X 27 AA approximate repeats. Positions 205-274 (GLVELVIGQK…SRGRPRKVQN (70 aa)) are 2 X 35 AA approximate tandem repeats (type C). A disordered region spans residues 220–282 (PSQLVETGKR…QNSPTSFLEN (63 aa)). DNA-binding regions (a.T hook) lie at residues 226–236 (TGKRGRGRPRK) and 261–271 (TGKRSRGRPRK). Residues 272–282 (VQNSPTSFLEN) are compositionally biased toward polar residues. Positions 303–320 (SLTIPTDNQSRTYNSDQS) are enriched in polar residues. Disordered stretches follow at residues 303–343 (SLTI…SDDT) and 363–484 (PSQL…RMEE). The tract at residues 348 to 417 (GFKELVIGQE…SRGRPRKVQD (70 aa)) is 2 X 35 AA approximate tandem repeats (type C). 2 DNA-binding regions (a.T hook) span residues 369-379 (AGKRGRGRPRK) and 404-414 (TGKRSRGRPRK). The segment at 578–635 (DIFCAKCGSKDVTLSNDIILCDGACDRGFHQFCLDPPLLKEYIPPDDEGWLCPGCECK) adopts a PHD-type zinc-finger fold. Disordered stretches follow at residues 667–810 (AASG…PLYP) and 851–901 (EEYG…ARES). One copy of the 4-1 repeat lies at 678-693 (GLPSDDSEDDDYDPGG). The segment at 678 to 744 (GLPSDDSEDD…SEDDEYDPSG (67 aa)) is 2 X 16 AA Asp/Glu-rich (acidic) repeats. Residues 705–718 (SSTDESDYQSESDD) are compositionally biased toward acidic residues. The stretch at 729–744 (GLPSDDSEDDEYDPSG) is one 4-2 repeat. Composition is skewed to basic and acidic residues over residues 788–802 (DHVRNNEEGCGHPEQ) and 874–901 (NNSDKEATAMERGRESGDLELDQKARES). Residues 935 to 994 (KSTSKTLHGEHATQRLLQSFKENQYPQRAVKESLAAELALSVRQVSNWFNNRRWSFRHSS) constitute a DNA-binding region (homeobox).

It belongs to the PHD-associated homeobox family.

The protein localises to the nucleus. Functionally, specifically binds to the fungal elicitor-responsive DNA element, 5'-CTAATTGTTTA-3', of the gene PR2 promoter. This chain is Pathogenesis-related homeodomain protein (PRH), found in Petroselinum crispum (Parsley).